The following is a 1379-amino-acid chain: DNA-directed RNA polymerase subunit beta'' (1379 aa).

Zn(2+)-binding residues include Cys-224, Cys-295, Cys-302, and Cys-305. The disordered stretch occupies residues 503-524 (SVQSLSVKRRSTSKLSETNDEA).

The protein belongs to the RNA polymerase beta' chain family. RpoC2 subfamily. As to quaternary structure, in plastids the minimal PEP RNA polymerase catalytic core is composed of four subunits: alpha, beta, beta', and beta''. When a (nuclear-encoded) sigma factor is associated with the core the holoenzyme is formed, which can initiate transcription. The cofactor is Zn(2+).

Its subcellular location is the plastid. The enzyme catalyses RNA(n) + a ribonucleoside 5'-triphosphate = RNA(n+1) + diphosphate. In terms of biological role, DNA-dependent RNA polymerase catalyzes the transcription of DNA into RNA using the four ribonucleoside triphosphates as substrates. In Cuscuta exaltata (Tall dodder), this protein is DNA-directed RNA polymerase subunit beta''.